Consider the following 174-residue polypeptide: Crossover junction endodeoxyribonuclease RuvC (174 aa).

Residues aspartate 8, glutamate 69, and aspartate 141 contribute to the active site. Mg(2+) contacts are provided by aspartate 8, glutamate 69, and aspartate 141.

It belongs to the RuvC family. In terms of assembly, homodimer which binds Holliday junction (HJ) DNA. The HJ becomes 2-fold symmetrical on binding to RuvC with unstacked arms; it has a different conformation from HJ DNA in complex with RuvA. In the full resolvosome a probable DNA-RuvA(4)-RuvB(12)-RuvC(2) complex forms which resolves the HJ. The cofactor is Mg(2+).

The protein localises to the cytoplasm. The catalysed reaction is Endonucleolytic cleavage at a junction such as a reciprocal single-stranded crossover between two homologous DNA duplexes (Holliday junction).. The RuvA-RuvB-RuvC complex processes Holliday junction (HJ) DNA during genetic recombination and DNA repair. Endonuclease that resolves HJ intermediates. Cleaves cruciform DNA by making single-stranded nicks across the HJ at symmetrical positions within the homologous arms, yielding a 5'-phosphate and a 3'-hydroxyl group; requires a central core of homology in the junction. The consensus cleavage sequence is 5'-(A/T)TT(C/G)-3'. Cleavage occurs on the 3'-side of the TT dinucleotide at the point of strand exchange. HJ branch migration catalyzed by RuvA-RuvB allows RuvC to scan DNA until it finds its consensus sequence, where it cleaves and resolves the cruciform DNA. The sequence is that of Crossover junction endodeoxyribonuclease RuvC from Xanthomonas oryzae pv. oryzae (strain MAFF 311018).